The primary structure comprises 419 residues: Hyaluronan synthase (419 aa).

Transmembrane regions (helical) follow at residues 8 to 28 (LIVLSFICLISILIYLNMYLF), 33 to 53 (VGIYGVILITYLVIKLGLSFL), 318 to 338 (IVALWTIFEVVMFMMLIVAIG), 345 to 365 (AIQLDLIKLFAFLSIIFIVAL), and 376 to 396 (PASFLLSPLYGILHLFVLQPL).

It belongs to the NodC/HAS family. Mg(2+) serves as cofactor.

It localises to the cell membrane. The enzyme catalyses [hyaluronan](n) + UDP-N-acetyl-alpha-D-glucosamine = N-acetyl-beta-D-glucosaminyl-(1-&gt;4)-[hyaluronan](n) + UDP + H(+). It catalyses the reaction N-acetyl-beta-D-glucosaminyl-(1-&gt;4)-[hyaluronan](n) + UDP-alpha-D-glucuronate = [hyaluronan](n+1) + UDP + H(+). It functions in the pathway glycan biosynthesis; hyaluronan biosynthesis. Glycosaminoglycan synthesis. The hyaluronic acid capsule is involved in the pathogenicity of group A Streptococci; it may be the major virulence determinant. The polypeptide is Hyaluronan synthase (hasA) (Streptococcus pyogenes serotype M3 (strain ATCC BAA-595 / MGAS315)).